A 348-amino-acid polypeptide reads, in one-letter code: Ephrin-4 (348 aa).

The N-terminal stretch at 1-20 is a signal peptide; the sequence is MKQFFEFLITTFLLLGLAAA. One can recognise an Ephrin RBD domain in the interval 21 to 178; that stretch reads DEHIVYWNST…SQNMRLSMKV (158 aa). Asn-28 carries an N-linked (GlcNAc...) asparagine glycan. Intrachain disulfides connect Cys-53/Cys-91 and Cys-79/Cys-167. A glycan (N-linked (GlcNAc...) asparagine) is linked at Asn-157. The segment at 207-237 is disordered; sequence GGQEDEDSDNDNAHLLPRDLEGSTNPKFRRP. Ser-329 carries the GPI-anchor amidated serine lipid modification. Residues 330 to 348 constitute a propeptide, removed in mature form; the sequence is STSLSTNFAILLAVIYVLY.

Belongs to the ephrin family. In terms of assembly, interacts with lat-2. Post-translationally, may undergo proteolysis by metalloprotease sup-17 to give rise to a soluble form.

The protein resides in the cell membrane. Functionally, regulates the formation or stabilization of cell-cell contacts at several stages of epithelial morphogenesis. In early embryonic development, involved in ventral closure of the epidermis. During male tail morphogenesis, regulates precursor cell sorting together with mab-20 and allows the formation of distinct sensory rays. Probably acts as a ligand for lad-2 to regulate axon guidance of several neurons including SDQL, SDQR, SMD and PLN neurons during neurogenesis. This Caenorhabditis elegans protein is Ephrin-4 (efn-4).